A 341-amino-acid polypeptide reads, in one-letter code: Chitin synthase 3 complex protein CSI2 (341 aa).

Positions 35–70 are enriched in low complexity; the sequence is SSSTKAADSSSKGSSSAKTTTSLGKSSVTSKDVSSS. 3 disordered regions span residues 35-78, 272-291, and 298-341; these read SSST…SSTK, DSLSSTPREPGATQILGKFT, and NYTS…DGKE.

Functionally, appears to be a structural component of the chitin synthase 3 complex. This Saccharomyces cerevisiae (strain ATCC 204508 / S288c) (Baker's yeast) protein is Chitin synthase 3 complex protein CSI2 (CSI2).